A 790-amino-acid polypeptide reads, in one-letter code: Ribonucleoside-diphosphate reductase large subunit (790 aa).

Residues threonine 208, serine 223–cysteine 224, glycine 254, asparagine 436–glutamate 440, and proline 621–serine 625 contribute to the substrate site. Cysteine 224 and cysteine 453 are joined by a disulfide. The Proton acceptor role is filled by asparagine 436. The active-site Cysteine radical intermediate is the cysteine 438. Glutamate 440 (proton acceptor) is an active-site residue.

It belongs to the ribonucleoside diphosphate reductase large chain family. Heterotetramer composed of a homodimer of the large subunit (R1) and a homodimer of the small subunit (R2). Larger multisubunit protein complex are also active, composed of (R1)n(R2)n.

It catalyses the reaction a 2'-deoxyribonucleoside 5'-diphosphate + [thioredoxin]-disulfide + H2O = a ribonucleoside 5'-diphosphate + [thioredoxin]-dithiol. Its function is as follows. Ribonucleoside-diphosphate reductase holoenzyme provides the precursors necessary for viral DNA synthesis. Allows virus growth in non-dividing cells, as well as reactivation from latency in infected hosts. Catalyzes the biosynthesis of deoxyribonucleotides from the corresponding ribonucleotides. The polypeptide is Ribonucleoside-diphosphate reductase large subunit (Equus caballus (Horse)).